The primary structure comprises 361 residues: Phosphoserine aminotransferase (361 aa).

S9 and R42 together coordinate L-glutamate. Pyridoxal 5'-phosphate contacts are provided by residues 76–77 (AR), W103, T153, D173, and Q196. The residue at position 197 (K197) is an N6-(pyridoxal phosphate)lysine. 238-239 (NT) contributes to the pyridoxal 5'-phosphate binding site.

It belongs to the class-V pyridoxal-phosphate-dependent aminotransferase family. SerC subfamily. As to quaternary structure, homodimer. Pyridoxal 5'-phosphate is required as a cofactor.

It is found in the cytoplasm. It catalyses the reaction O-phospho-L-serine + 2-oxoglutarate = 3-phosphooxypyruvate + L-glutamate. The enzyme catalyses 4-(phosphooxy)-L-threonine + 2-oxoglutarate = (R)-3-hydroxy-2-oxo-4-phosphooxybutanoate + L-glutamate. It participates in amino-acid biosynthesis; L-serine biosynthesis; L-serine from 3-phospho-D-glycerate: step 2/3. The protein operates within cofactor biosynthesis; pyridoxine 5'-phosphate biosynthesis; pyridoxine 5'-phosphate from D-erythrose 4-phosphate: step 3/5. In terms of biological role, catalyzes the reversible conversion of 3-phosphohydroxypyruvate to phosphoserine and of 3-hydroxy-2-oxo-4-phosphonooxybutanoate to phosphohydroxythreonine. The polypeptide is Phosphoserine aminotransferase (Wigglesworthia glossinidia brevipalpis).